Consider the following 154-residue polypeptide: Transcriptional repressor NrdR (154 aa).

Residues 3 to 34 (CPFCRHPDSRVVDSREADEGQAIRRRRSCPEC) fold into a zinc finger. The 91-residue stretch at 46–136 (LSVVKRSGVT…VYRSFSSAED (91 aa)) folds into the ATP-cone domain.

This sequence belongs to the NrdR family. It depends on Zn(2+) as a cofactor.

In terms of biological role, negatively regulates transcription of bacterial ribonucleotide reductase nrd genes and operons by binding to NrdR-boxes. The sequence is that of Transcriptional repressor NrdR from Rhodococcus jostii (strain RHA1).